The primary structure comprises 373 residues: Spermidine/putrescine import ATP-binding protein PotA (373 aa).

The ABC transporter domain occupies 5-235 (IVFEHVSKKF…PKSSFVADFI (231 aa)). 37–44 (GPSGCGKT) serves as a coordination point for ATP.

Belongs to the ABC transporter superfamily. Spermidine/putrescine importer (TC 3.A.1.11.1) family. As to quaternary structure, the complex is composed of two ATP-binding proteins (PotA), two transmembrane proteins (PotB and PotC) and a solute-binding protein (PotD).

The protein resides in the cell inner membrane. It catalyses the reaction ATP + H2O + polyamine-[polyamine-binding protein]Side 1 = ADP + phosphate + polyamineSide 2 + [polyamine-binding protein]Side 1.. Its function is as follows. Part of the ABC transporter complex PotABCD involved in spermidine/putrescine import. Responsible for energy coupling to the transport system. The protein is Spermidine/putrescine import ATP-binding protein PotA of Protochlamydia amoebophila (strain UWE25).